Reading from the N-terminus, the 183-residue chain is uncharacterized protein (183 aa).

The tract at residues 1–23 is disordered; sequence MGSSFVIDRSSSSPAPPRGPAPK.

This is an uncharacterized protein from Saccharomyces cerevisiae (strain ATCC 204508 / S288c) (Baker's yeast).